The following is a 321-amino-acid chain: Cytochrome c biogenesis protein CcsA (321 aa).

The next 8 membrane-spanning stretches (helical) occupy residues 17–37 (VVSIVIIIHFLTLLVNEFVGL), 48–68 (TFFCLTGLLITRWIYSGHLPI), 71–91 (LYESLIFLSWIFSIIHMVPYF), 98–118 (LSTITAPSTFFTQGFATWGLL), 143–163 (MVSGYAALLCGSLLSAALLVI), 225–245 (ILSIGFLFLTIGILSGAVWAN), 259–273 (TWAFITWTIFAIYFH), and 286–306 (AIVASIGFLIIWICYFGVNLL).

This sequence belongs to the CcmF/CycK/Ccl1/NrfE/CcsA family. As to quaternary structure, may interact with Ccs1.

The protein localises to the plastid. The protein resides in the chloroplast thylakoid membrane. In terms of biological role, required during biogenesis of c-type cytochromes (cytochrome c6 and cytochrome f) at the step of heme attachment. The protein is Cytochrome c biogenesis protein CcsA of Populus trichocarpa (Western balsam poplar).